The sequence spans 442 residues: Putative FNIP repeat-containing protein L170 (442 aa).

FNIP repeat units follow at residues 213 to 252, 253 to 294, and 295 to 348; these read FNSSINSLRNNIRVLKLGNSFNKPIDILPELLEELYIGRG, FNSE…LGCF, and FNQS…FGMY.

The polypeptide is Putative FNIP repeat-containing protein L170 (Acanthamoeba polyphaga mimivirus (APMV)).